A 64-amino-acid chain; its full sequence is Conotoxin Im11.2 (64 aa).

Positions 1 to 26 (MMFRLTSVSCFLLVIVCLNLVVLTNA) are cleaved as a signal peptide. Cystine bridges form between Cys27–Cys41, Cys34–Cys46, Cys40–Cys50, and Cys45–Cys54. At Asp57 the chain carries Aspartic acid 1-amide. The propeptide occupies 61–64 (ATFQ).

Belongs to the conotoxin I2 superfamily. As to expression, expressed by the venom duct.

It localises to the secreted. This chain is Conotoxin Im11.2, found in Conus imperialis (Imperial cone).